Here is a 544-residue protein sequence, read N- to C-terminus: Methionine--tRNA ligase (544 aa).

A 'HIGH' region motif is present at residues 10-20 (PYANGSLHLGH). Residues Cys141, Cys144, Cys153, and Cys156 each contribute to the Zn(2+) site. The 'KMSKS' region signature appears at 329 to 333 (KLSTS). Position 332 (Thr332) interacts with ATP.

This sequence belongs to the class-I aminoacyl-tRNA synthetase family. MetG type 1 subfamily. As to quaternary structure, monomer. Zn(2+) is required as a cofactor.

It is found in the cytoplasm. It catalyses the reaction tRNA(Met) + L-methionine + ATP = L-methionyl-tRNA(Met) + AMP + diphosphate. Is required not only for elongation of protein synthesis but also for the initiation of all mRNA translation through initiator tRNA(fMet) aminoacylation. The protein is Methionine--tRNA ligase of Bacillus cereus (strain AH187).